The primary structure comprises 344 residues: Ribosomal RNA large subunit methyltransferase Cfr (344 aa).

Glutamate 90 acts as the Proton acceptor in catalysis. The 234-residue stretch at 97–330 folds into the Radical SAM core domain; sequence KQGWESFCIS…ATVRTQFGSE (234 aa). The cysteines at positions 104 and 335 are disulfide-linked. 3 residues coordinate [4Fe-4S] cluster: cysteine 111, cysteine 115, and cysteine 118. S-adenosyl-L-methionine contacts are provided by residues 157–158, serine 188, 211–213, and asparagine 292; these read GE and SLH. Residue cysteine 335 is the S-methylcysteine intermediate of the active site.

This sequence belongs to the radical SAM superfamily. RlmN family. Cfr subfamily. [4Fe-4S] cluster serves as cofactor.

The protein resides in the cytoplasm. It carries out the reaction adenosine(2503) in 23S rRNA + 2 reduced [2Fe-2S]-[ferredoxin] + 2 S-adenosyl-L-methionine = 8-methyladenosine(2503) in 23S rRNA + 5'-deoxyadenosine + L-methionine + 2 oxidized [2Fe-2S]-[ferredoxin] + S-adenosyl-L-homocysteine. Functionally, specifically methylates position 8 of adenine 2503 in 23S rRNA. Confers resistance to some classes of antibiotics. This Clostridium botulinum (strain Loch Maree / Type A3) protein is Ribosomal RNA large subunit methyltransferase Cfr.